Reading from the N-terminus, the 754-residue chain is uncharacterized protein (754 aa).

10 helical membrane-spanning segments follow: residues 3–23, 24–44, 50–70, 223–243, 254–274, 320–340, 370–390, 392–412, 446–466, and 471–491; these read ITTV…LPQL, PGTL…FIPV, IALT…ILWA, HLMA…AGLI, WIHW…YAWL, VAIL…LIFW, LLLM…SFIA, LLAI…AMVV, WINI…LLVV, and AWRT…WPLW.

The protein to B.subtilis ComEC, N.gonorrhoeae ComA, and H.influenzae Rec2.

It is found in the cell membrane. This is an uncharacterized protein from Escherichia coli (strain K12).